A 1058-amino-acid polypeptide reads, in one-letter code: Bromodomain-containing protein 1 (1058 aa).

Residues 1-12 are compositionally biased toward basic residues; it reads MRRKGRCHRGSA. The segment at 1-26 is disordered; it reads MRRKGRCHRGSAARHPSSPCSVKHSP. The tract at residues 31-80 is interaction with KAT7/HBO1 and histones; that stretch reads LTYAQAQRMVEIEIEGRLHRISIFDPLEIILEDDLTAQEMSECNSNKENS. The tract at residues 92 to 116 is disordered; that stretch reads HKNNRVKKKNEALPSAHGTPASASA. Ser-128 carries the phosphoserine modification. The PHD-type 1 zinc finger occupies 214-264; the sequence is DAVCCICMDGECQNSNVILFCDMCNLAVHQECYGVPYIPEGQWLCRHCLQS. A C2HC pre-PHD-type zinc finger spans residues 268-301; that stretch reads PADCVLCPNKGGAFKKTDDDRWGHVVCALWIPEV. The segment at 325–389 adopts a PHD-type 2 zinc-finger fold; it reads LTCYLCKQKG…RKTAYCDVHT (65 aa). Lys-368, Lys-516, and Lys-519 each carry N6-acetyllysine. Glycyl lysine isopeptide (Lys-Gly) (interchain with G-Cter in SUMO2) cross-links involve residues Lys-554 and Lys-594. A Bromo domain is found at 562-666; the sequence is LRLTPLTVLL…DQGGVVLRQA (105 aa). 2 disordered regions span residues 755–776 and 791–868; these read LSQQHSQPLPTGPGLEGFEEDG and LETL…DSSF. Ser-803 bears the Phosphoserine mark. A compositionally biased stretch (low complexity) spans 852–867; that stretch reads SESSISSSNSPLCDSS. Position 903 is an N6-acetyllysine (Lys-903). Arg-906 is modified (phosphoserine). The PWWP domain maps to 929 to 1012; sequence PLKVVWAKCS…KSKMVPLGID (84 aa). 2 positions are modified to phosphoserine: Ser-1052 and Ser-1055.

As to quaternary structure, component of some HBO1 complex composed of KAT7/HBO1, MEAF6, ING4 and BRD1/BRPF2. Component of the MOZ/MORF complex composed at least of ING5, KAT6A, KAT6B, MEAF6 and one of BRPF1, BRD1/BRPF2 and BRPF3. Interacts (via PHD-type zinc finger domain) with unmodified histone H3. Interacts (via PWWP domain) with dimethylated and trimethylated 'Lys-79' on histone H3. Highly expressed in testis.

It localises to the nucleus. It is found in the chromosome. Scaffold subunit of various histone acetyltransferase (HAT) complexes, such as the MOZ/MORF and HBO1 complexes, that acts as a regulator of hematopoiesis. Plays a key role in HBO1 complex by directing KAT7/HBO1 specificity towards histone H3 'Lys-14' acetylation (H3K14ac), thereby promoting erythroid differentiation. In Homo sapiens (Human), this protein is Bromodomain-containing protein 1.